Reading from the N-terminus, the 449-residue chain is GTPase Der (449 aa).

EngA-type G domains lie at F2–P169 and V180–T355. GTP is bound by residues G8 to S15, D55 to L59, N118 to E121, G186 to S193, D233 to I237, and N298 to D301. Residues K356 to N440 enclose the KH-like domain.

Belongs to the TRAFAC class TrmE-Era-EngA-EngB-Septin-like GTPase superfamily. EngA (Der) GTPase family. Associates with the 50S ribosomal subunit.

Its function is as follows. GTPase that plays an essential role in the late steps of ribosome biogenesis. In Mycoplasma pneumoniae (strain ATCC 29342 / M129 / Subtype 1) (Mycoplasmoides pneumoniae), this protein is GTPase Der.